The sequence spans 3329 residues: Breast cancer type 2 susceptibility protein homolog (3329 aa).

The interaction with PALB2 stretch occupies residues 1-40 (MPVEYKRRPTFWEIFKARCSTADLGPISLNWFEELSSEAP). Disordered regions lie at residues 37–69 (SEAP…QRNP) and 207–241 (EARS…SVPS). 2 positions are modified to phosphoserine: serine 435 and serine 481. A disordered region spans residues 628–650 (PDSSDKKRCLPNDPEEPSLTNSF). Residues 628 to 979 (PDSSDKKRCL…DKWSEFLDPV (352 aa)) are interaction with NPM1. Position 735 is a phosphoserine (serine 735). Positions 934-953 (EKSRNNIEQHQKGTEDKDFK) are enriched in basic and acidic residues. Residues 934–965 (EKSRNNIEQHQKGTEDKDFKSNSSLNMKSDGN) are disordered. Residues 954 to 965 (SNSSLNMKSDGN) are compositionally biased toward polar residues. BRCA2 repeat units lie at residues 981–1015 (NHNF…DIEE) and 1192–1226 (NEME…DIEN). Residues 982–2035 (HNFGGSFRTA…LHKVKGMLEE (1054 aa)) are interaction with RAD51. A disordered region spans residues 1296 to 1340 (NTKHEDSYTSSQRNNLENSDGSMSSTSGPVYIHKGDSDLPADQGS). The span at 1303–1323 (YTSSQRNNLENSDGSMSSTSG) shows a compositional bias: polar residues. 5 BRCA2 repeats span residues 1394–1428 (IKEF…RETD), 1491–1525 (KEPT…ETQY), 1623–1657 (TEDS…EQGD), 1924–1958 (PSRT…EMDG), and 2004–2038 (NSSV…EFDL). Residue serine 2048 is modified to Phosphoserine. A disordered region spans residues 2073-2099 (NSKLQKTYNDKSSLPSNYKESGSSGNT). Over residues 2074–2099 (SKLQKTYNDKSSLPSNYKESGSSGNT) the composition is skewed to polar residues. The interval 2219-2285 (KRGGVTVDAV…EPVTCGPFCS (67 aa)) is interaction with HSF2BP. An interaction with FANCD2 region spans residues 2298–2466 (TSPAQELLSK…SPKQLYIYGV (169 aa)). The interval 2361-2393 (FHGDEHFNSKNVNLEGKNQKSTDGDREDGNDSH) is disordered. Basic and acidic residues predominate over residues 2377-2393 (KNQKSTDGDREDGNDSH). An interaction with SEM1 region spans residues 2402-2753 (MSSLQSARDL…QRVYPLQWVE (352 aa)). Residues 2603-2619 (AAKTLVLCISDIISPST) carry the Nuclear export signal; masked by interaction with SEM1 motif. Serine 3214 carries the phosphoserine; by CDK1 and CDK2 modification. 2 disordered regions span residues 3221 to 3257 (FQPP…VSLP) and 3273 to 3329 (QALT…AVES). Serine 3241 carries the phosphoserine modification. Residues 3309-3329 (SRKESLRDCRGDSSEKLAVES) are compositionally biased toward basic and acidic residues.

Monomer and dimer. Interacts with RAD51; regulates RAD51 recruitment and function at sites of DNA repair. Interacts with SEM1, WDR16, USP11, DMC1, ROCK2 and NPM1. Interacts with both nonubiquitinated and monoubiquitinated FANCD2; this complex also includes XRCC3 and phosphorylated FANCG. Part of a BRCA complex containing BRCA1, BRCA2 and PALB2. Component of the homologous recombination repair (HR) complex composed of ERCC5/XPG, BRCA2, PALB2, DSS1 and RAD51. Within the complex, interacts with ERCC5/XPG and PALB2. Interacts directly with PALB2 which may serve as a scaffold for a HR complex containing PALB2, BRCA2, RAD51C, RAD51 and XRCC3. Interacts with BRCA1 only in the presence of PALB2 which serves as the bridging protein. Interacts with POLH; the interaction is direct. Interacts with the TREX-2 complex subunits PCID2 and SEM1. Interacts with HSF2BP and BRME1; the interaction with HSF2BP is direct and allows the formation of a ternary complex. The complex BRME1:HSF2BP:BRCA2 interacts with SPATA22, MEIOB and RAD51. Post-translationally, phosphorylated by ATM upon irradiation-induced DNA damage. Phosphorylation by CHEK1 and CHEK2 regulates interaction with RAD51. Phosphorylation at Ser-3291 by CDK1 and CDK2 is low in S phase when recombination is active, but increases as cells progress towards mitosis; this phosphorylation prevents homologous recombination-dependent repair during S phase and G2 by inhibiting RAD51 binding. In terms of processing, ubiquitinated in the absence of DNA damage; this does not lead to proteasomal degradation. In contrast, ubiquitination in response to DNA damage leads to proteasomal degradation. Widely expressed. Highest expression in cerebellum, testis, ileum, appendix, epididymis, ovary and mammary gland. No expression in lung.

It localises to the nucleus. The protein resides in the cytoplasm. The protein localises to the cytoskeleton. It is found in the microtubule organizing center. Its subcellular location is the centrosome. Involved in double-strand break repair and/or homologous recombination. Binds RAD51 and potentiates recombinational DNA repair by promoting assembly of RAD51 onto single-stranded DNA (ssDNA). Acts by targeting RAD51 to ssDNA over double-stranded DNA, enabling RAD51 to displace replication protein-A (RPA) from ssDNA and stabilizing RAD51-ssDNA filaments by blocking ATP hydrolysis. Part of a PALB2-scaffolded HR complex containing RAD51C and which is thought to play a role in DNA repair by HR. May participate in S phase checkpoint activation. Binds selectively to ssDNA, and to ssDNA in tailed duplexes and replication fork structures. May play a role in the extension step after strand invasion at replication-dependent DNA double-strand breaks; together with PALB2 is involved in both POLH localization at collapsed replication forks and DNA polymerization activity. In concert with NPM1, regulates centrosome duplication. Interacts with the TREX-2 complex (transcription and export complex 2) subunits PCID2 and SEM1, and is required to prevent R-loop-associated DNA damage and thus transcription-associated genomic instability, independently of its known role in homologous recombination. This Mus musculus (Mouse) protein is Breast cancer type 2 susceptibility protein homolog.